A 274-amino-acid polypeptide reads, in one-letter code: Coiled-coil domain-containing protein 28A (274 aa).

The segment at 121-166 (VSKSTGFSNPASQSTSQRPKLKRVMKEKTKPQGGEGKGAQSTPIQH) is disordered. Over residues 122–138 (SKSTGFSNPASQSTSQR) the composition is skewed to polar residues. Positions 234–263 (KRKTASDSNLDRLLSDLEELNSSIQKLHLA) form a coiled coil.

The sequence is that of Coiled-coil domain-containing protein 28A (CCDC28A) from Homo sapiens (Human).